A 152-amino-acid polypeptide reads, in one-letter code: MGLSTLEQKLTEIISAPVEALGYELVGIEFIRGRQSTLRIYIDSDDGITVDACADVSHQVSAVLDVEDPITVAYNLEVSSPGLDRPMFTAEHYTRYLGEEVTLVLRMAMQNRRKWQGIIKAVDGEMITVTVDGKDEVFALSNIQKANLVPHF.

This sequence belongs to the RimP family.

The protein resides in the cytoplasm. Required for maturation of 30S ribosomal subunits. This is Ribosome maturation factor RimP from Yersinia pestis.